Here is a 174-residue protein sequence, read N- to C-terminus: Period clock protein (174 aa).

The disordered stretch occupies residues 46-134; it reads SSEGTGAGTG…GTGTGTGTGT (89 aa). A run of 45 repeats spans residues 49–50, 51–52, 53–54, 55–56, 57–58, 59–60, 61–62, 63–64, 65–66, 67–68, 69–70, 71–72, 73–74, 75–76, 77–78, 79–80, 81–82, 83–84, 85–86, 87–88, 89–90, 91–92, 93–94, 95–96, 97–98, 99–100, 101–102, 103–104, 105–106, 107–108, 109–110, 111–112, 113–114, 115–116, 117–118, 119–120, 121–122, 123–124, 125–126, 127–128, 129–130, 131–132, 133–134, 135–136, and 137–138. A 45 X 2 AA tandem repeats of G-[TA] region spans residues 49 to 138; sequence GTGAGTGTGT…GTGTGTGTGT (90 aa). Over residues 50–134 the composition is skewed to gly residues; that stretch reads TGAGTGTGTG…GTGTGTGTGT (85 aa).

It is found in the plastid. Its subcellular location is the chloroplast. The protein is Period clock protein of Acetabularia acetabulum (Mermaid's wine glass).